We begin with the raw amino-acid sequence, 367 residues long: Peptide chain release factor 2 (367 aa).

At Q249 the chain carries N5-methylglutamine.

This sequence belongs to the prokaryotic/mitochondrial release factor family. In terms of processing, methylated by PrmC. Methylation increases the termination efficiency of RF2.

It localises to the cytoplasm. In terms of biological role, peptide chain release factor 2 directs the termination of translation in response to the peptide chain termination codons UGA and UAA. The chain is Peptide chain release factor 2 from Pseudothermotoga lettingae (strain ATCC BAA-301 / DSM 14385 / NBRC 107922 / TMO) (Thermotoga lettingae).